Consider the following 114-residue polypeptide: UPF0342 protein LCABL_19440 (114 aa).

It belongs to the UPF0342 family.

The polypeptide is UPF0342 protein LCABL_19440 (Lacticaseibacillus casei (strain BL23) (Lactobacillus casei)).